A 748-amino-acid polypeptide reads, in one-letter code: CCR4-NOT transcription complex subunit 10-B (748 aa).

The segment covering 1–16 has biased composition (basic and acidic residues); sequence MAADKAGEQGAEKHEG. Disordered regions lie at residues 1–25, 483–524, and 605–634; these read MAADKAGEQGAEKHEGSANCSGISD, KQEN…PPSS, and VSLGVSSNEQEQGSDKGENEPMESAGKQIP. Composition is skewed to polar residues over residues 487–509 and 605–615; these read GSKASSQTVNTDSSGESSDVCSN and VSLGVSSNEQE.

The protein belongs to the CNOT10 family. In terms of assembly, component of the CCR4-NOT complex. cnot10 and cnot11 form a subcomplex docked to the cnot1 scaffold.

It is found in the cytoplasm. It localises to the nucleus. Its function is as follows. Component of the CCR4-NOT complex which is one of the major cellular mRNA deadenylases and is linked to various cellular processes including bulk mRNA degradation, miRNA-mediated repression, translational repression during translational initiation and general transcription regulation. Additional complex functions may be a consequence of its influence on mRNA expression. Is not required for association of CNOT7 to the CCR4-NOT complex. The protein is CCR4-NOT transcription complex subunit 10-B (cnot10-b) of Xenopus laevis (African clawed frog).